We begin with the raw amino-acid sequence, 120 residues long: Seripauperin-2 (120 aa).

Residues 7-24 (IAAGVAAIAATASATTTL) traverse the membrane as a helical segment.

It belongs to the SRP1/TIP1 family. Seripauperin subfamily.

It localises to the membrane. This is Seripauperin-2 (PAU2) from Saccharomyces cerevisiae (strain ATCC 204508 / S288c) (Baker's yeast).